We begin with the raw amino-acid sequence, 123 residues long: Large ribosomal subunit protein eL8 (123 aa).

The protein belongs to the eukaryotic ribosomal protein eL8 family. As to quaternary structure, part of the 50S ribosomal subunit. Probably part of the RNase P complex.

Its subcellular location is the cytoplasm. Its function is as follows. Multifunctional RNA-binding protein that recognizes the K-turn motif in ribosomal RNA, the RNA component of RNase P, box H/ACA, box C/D and box C'/D' sRNAs. This chain is Large ribosomal subunit protein eL8, found in Methanothermobacter thermautotrophicus (strain ATCC 29096 / DSM 1053 / JCM 10044 / NBRC 100330 / Delta H) (Methanobacterium thermoautotrophicum).